The following is a 316-amino-acid chain: Cytochrome c biogenesis protein CcsA (316 aa).

8 helical membrane-spanning segments follow: residues 12–32 (HISLSIILIVITIFLMNLLVY), 44–64 (GMVASFLCITGLLVIRWIYSG), 71–91 (LYESLMFLSWSFSIFYMIPYF), 98–118 (LNVLTAPGTIFTQGFATSGVL), 145–165 (LSYAALLCGSLLSVALLVILF), 222–242 (VISLGFLFLTIGILSGAVWAN), 256–270 (TWAFITWTIFAIYLH), and 283–303 (AIVASIGFFIIWICYFGVNLL).

It belongs to the CcmF/CycK/Ccl1/NrfE/CcsA family. May interact with Ccs1.

The protein resides in the plastid. It is found in the chloroplast thylakoid membrane. Functionally, required during biogenesis of c-type cytochromes (cytochrome c6 and cytochrome f) at the step of heme attachment. This Ranunculus macranthus (Large buttercup) protein is Cytochrome c biogenesis protein CcsA.